Consider the following 121-residue polypeptide: UPF0102 protein BHWA1_02005 (121 aa).

The protein belongs to the UPF0102 family.

The chain is UPF0102 protein BHWA1_02005 from Brachyspira hyodysenteriae (strain ATCC 49526 / WA1).